The sequence spans 647 residues: Threonine--tRNA ligase (647 aa).

The 63-residue stretch at 1-63 (MYMIQLTFPD…EHDGKIELVM (63 aa)) folds into the TGS domain. The segment at 247 to 544 (DHRKLGKELD…LIEEYKGAFP (298 aa)) is catalytic. Residues cysteine 340, histidine 391, and histidine 521 each coordinate Zn(2+).

The protein belongs to the class-II aminoacyl-tRNA synthetase family. As to quaternary structure, homodimer. It depends on Zn(2+) as a cofactor.

It localises to the cytoplasm. The enzyme catalyses tRNA(Thr) + L-threonine + ATP = L-threonyl-tRNA(Thr) + AMP + diphosphate + H(+). Functionally, catalyzes the attachment of threonine to tRNA(Thr) in a two-step reaction: L-threonine is first activated by ATP to form Thr-AMP and then transferred to the acceptor end of tRNA(Thr). Also edits incorrectly charged L-seryl-tRNA(Thr). The polypeptide is Threonine--tRNA ligase (Exiguobacterium sp. (strain ATCC BAA-1283 / AT1b)).